A 440-amino-acid chain; its full sequence is Enolase (440 aa).

Residue Q168 coordinates (2R)-2-phosphoglycerate. The active-site Proton donor is the E210. Residues D249, E300, and D326 each contribute to the Mg(2+) site. Residues K351, R380, S381, and K402 each coordinate (2R)-2-phosphoglycerate. K351 (proton acceptor) is an active-site residue.

It belongs to the enolase family. Requires Mg(2+) as cofactor.

The protein localises to the cytoplasm. The protein resides in the secreted. Its subcellular location is the cell surface. The catalysed reaction is (2R)-2-phosphoglycerate = phosphoenolpyruvate + H2O. It functions in the pathway carbohydrate degradation; glycolysis; pyruvate from D-glyceraldehyde 3-phosphate: step 4/5. In terms of biological role, catalyzes the reversible conversion of 2-phosphoglycerate (2-PG) into phosphoenolpyruvate (PEP). It is essential for the degradation of carbohydrates via glycolysis. In Ureaplasma parvum serovar 3 (strain ATCC 27815 / 27 / NCTC 11736), this protein is Enolase.